Here is a 495-residue protein sequence, read N- to C-terminus: DNA double-strand break repair helicase HerA (495 aa).

ATP-binding positions include Arg-142, 151-156 (GSGKSN), and 459-460 (KI).

This sequence belongs to the HerA family. As to quaternary structure, interacts with Rad50 and Mre11.

It catalyses the reaction Couples ATP hydrolysis with the unwinding of duplex DNA at the replication fork by translocating in the 5'-3' direction. This creates two antiparallel DNA single strands (ssDNA). The leading ssDNA polymer is the template for DNA polymerase III holoenzyme which synthesizes a continuous strand.. The catalysed reaction is ATP + H2O = ADP + phosphate + H(+). It carries out the reaction Couples ATP hydrolysis with the unwinding of duplex DNA by translocating in the 3'-5' direction.. Its activity is regulated as follows. ATPase activity is slightly stimulated by either circular single- or double-stranded (ds)DNA with a weak preference for dsDNA. Its function is as follows. Involved in DNA double-strand break (DSB) repair. Probably acts with NurA to stimulate resection of the 5' strand and produce the long 3' single-strand that is required for RadA loading. Has DNA-dependent ATPase activity and bidirectional DNA helicase activity. Loads on either a 3' or a 5' DNA tail for subsequent DNA unwinding; has no activity on blunt-end DNA. In Sulfolobus acidocaldarius (strain ATCC 33909 / DSM 639 / JCM 8929 / NBRC 15157 / NCIMB 11770), this protein is DNA double-strand break repair helicase HerA.